We begin with the raw amino-acid sequence, 1888 residues long: E3 ubiquitin-protein ligase UPL3 (1888 aa).

Residues 1–10 (METRSRKRAE) are compositionally biased toward basic and acidic residues. Residues 1–157 (METRSRKRAE…NGGFMHPNMS (157 aa)) are disordered. A compositionally biased stretch (low complexity) spans 41-81 (LSSSSSSSLAPTPPSSSTTTRSRSSRSAAAAAPMDTSTDSS). Over residues 97–124 (NSDKGKEKEHDVRIRERERERDRAREQL) the composition is skewed to basic and acidic residues. Over residues 137-146 (DEDDDNDSED) the composition is skewed to acidic residues. ARM repeat units follow at residues 227–267 (EDSL…HLCD), 270–310 (PSSC…KISQ), 312–349 (HPTACLRAGALMAVLSYLDFFSTGVQRVALSTAANMCK), and 351–390 (LPSDASDYVMEAVPLLTNLLQYHDSKVLEYASICLTRIAE). Disordered regions lie at residues 660–711 (KPSH…IGAN), 970–1119 (ALKP…LPMC), 1134–1157 (DDDGLATSGRQMNPASGGTSGAAA), and 1280–1307 (RLSVGGASSTTPSKSTKSATTNSSVESQ). Positions 986-1002 (PSGAGVSSPSSSTPAST) are enriched in low complexity. The segment covering 1019-1029 (TSKKDPVHEKG) has biased composition (basic and acidic residues). Acidic residues predominate over residues 1076-1113 (SSEDEELEISPVDIDDALVIEEDDISDDEDDDNEDVLD). Composition is skewed to low complexity over residues 1148–1157 (ASGGTSGAAA) and 1286–1303 (ASSTTPSKSTKSATTNSS). Residues 1377–1451 (AKVPLDEFVN…ALNRLQQQQG (75 aa)) are K-box. An HECT domain is found at 1490 to 1888 (MYSSQKAVLE…NEGQGSFDLS (399 aa)). The active-site Glycyl thioester intermediate is cysteine 1855.

The protein belongs to the UPL family. K-HECT subfamily. Widely expressed.

It carries out the reaction S-ubiquitinyl-[E2 ubiquitin-conjugating enzyme]-L-cysteine + [acceptor protein]-L-lysine = [E2 ubiquitin-conjugating enzyme]-L-cysteine + N(6)-ubiquitinyl-[acceptor protein]-L-lysine.. The protein operates within protein modification; protein ubiquitination. Functionally, probable E3 ubiquitin-protein ligase which mediates ubiquitination and subsequent proteasomal degradation of target proteins. Involved in the repression of endoreduplication process and the cell morphogenesis in the trichomes. This is E3 ubiquitin-protein ligase UPL3 (UPL3) from Arabidopsis thaliana (Mouse-ear cress).